The primary structure comprises 424 residues: UPF0229 protein YPTS_2141 (424 aa).

The segment at 84-109 is disordered; it reads TNDRVDRPQGGGGGGSGQGNAGKDGE. Gly residues predominate over residues 92 to 105; it reads QGGGGGGSGQGNAG.

The protein belongs to the UPF0229 family.

This is UPF0229 protein YPTS_2141 from Yersinia pseudotuberculosis serotype IB (strain PB1/+).